Reading from the N-terminus, the 410-residue chain is Multifunctional CCA protein (410 aa).

Positions 8 and 11 each coordinate ATP. 2 residues coordinate CTP: Gly-8 and Arg-11. Asp-21 and Asp-23 together coordinate Mg(2+). The ATP site is built by Arg-91, Arg-137, and Arg-140. Residues Arg-91, Arg-137, and Arg-140 each contribute to the CTP site. Positions 225-326 constitute an HD domain; it reads SGIHTLMTLQ…LNVLKKTDAF (102 aa).

This sequence belongs to the tRNA nucleotidyltransferase/poly(A) polymerase family. Bacterial CCA-adding enzyme type 1 subfamily. As to quaternary structure, monomer. Can also form homodimers and oligomers. It depends on Mg(2+) as a cofactor. Ni(2+) is required as a cofactor.

The catalysed reaction is a tRNA precursor + 2 CTP + ATP = a tRNA with a 3' CCA end + 3 diphosphate. The enzyme catalyses a tRNA with a 3' CCA end + 2 CTP + ATP = a tRNA with a 3' CCACCA end + 3 diphosphate. Functionally, catalyzes the addition and repair of the essential 3'-terminal CCA sequence in tRNAs without using a nucleic acid template. Adds these three nucleotides in the order of C, C, and A to the tRNA nucleotide-73, using CTP and ATP as substrates and producing inorganic pyrophosphate. tRNA 3'-terminal CCA addition is required both for tRNA processing and repair. Also involved in tRNA surveillance by mediating tandem CCA addition to generate a CCACCA at the 3' terminus of unstable tRNAs. While stable tRNAs receive only 3'-terminal CCA, unstable tRNAs are marked with CCACCA and rapidly degraded. This chain is Multifunctional CCA protein, found in Neisseria gonorrhoeae (strain ATCC 700825 / FA 1090).